The following is a 317-amino-acid chain: Zinc transporter ZIP3 (317 aa).

At 1–3 (MSQ) the chain is on the extracellular side. The chain crosses the membrane as a helical span at residues 4 to 24 (LLVAKVLCMVGVFFFMLLGSL). Topologically, residues 25 to 42 (LPVKVIEADFEKAHRSKK) are cytoplasmic. Residues 43–63 (VLSLCNTFGGGVFLATCFNAL) form a helical membrane-spanning segment. The Extracellular portion of the chain corresponds to 64–85 (LPAVRDKLQQVLSLGHISTDYP). The chain crosses the membrane as a helical span at residues 86–106 (LAETLMMVGFFLTVFVEQLVL). The Cytoplasmic segment spans residues 107 to 172 (TFRRERPPFI…RELGRPGPLR (66 aa)). Ser125 and Ser129 each carry phosphoserine. A helical transmembrane segment spans residues 173 to 193 (LLSLVFALSAHSVFEGLALGL). Residues 194–199 (QEEGER) lie on the Extracellular side of the membrane. A helical transmembrane segment spans residues 200-220 (VVSLFVGVAVHETLVAVALGI). Residues 221 to 232 (SMARSAVPLRDA) are Cytoplasmic-facing. The helical transmembrane segment at 233–253 (AKLAVTVSAMIPVGIGLGLGI) threads the bilayer. Residues 254 to 265 (ESARSVASSVAS) lie on the Extracellular side of the membrane. A helical membrane pass occupies residues 266–286 (ALLQGLAGGTFLFVTFLEILA). The Cytoplasmic portion of the chain corresponds to 287 to 294 (KELEERSE). A helical transmembrane segment spans residues 295–315 (QLLKVLFLVLGYAVLAGMVFL). Residues 316 to 317 (KW) are Extracellular-facing.

This sequence belongs to the ZIP transporter (TC 2.A.5) family.

It localises to the cell membrane. The protein resides in the apical cell membrane. The enzyme catalyses Zn(2+)(in) = Zn(2+)(out). Transporter for the divalent cation Zn(2+). Mediates the influx of Zn(2+) into cells from extracellular space. Controls Zn(2+) accumulation into dentate gyrus granule cells in the hippocampus. Mediates Zn(2+) reuptake from the secreted milk within the alveolar lumen. The chain is Zinc transporter ZIP3 (Slc39a3) from Rattus norvegicus (Rat).